We begin with the raw amino-acid sequence, 317 residues long: tRNA(Ile)-lysidine synthase (317 aa).

ATP is bound at residue 32–37; it reads SGGVDS.

Belongs to the tRNA(Ile)-lysidine synthase family.

It localises to the cytoplasm. It carries out the reaction cytidine(34) in tRNA(Ile2) + L-lysine + ATP = lysidine(34) in tRNA(Ile2) + AMP + diphosphate + H(+). Ligates lysine onto the cytidine present at position 34 of the AUA codon-specific tRNA(Ile) that contains the anticodon CAU, in an ATP-dependent manner. Cytidine is converted to lysidine, thus changing the amino acid specificity of the tRNA from methionine to isoleucine. The polypeptide is tRNA(Ile)-lysidine synthase (Aquifex aeolicus (strain VF5)).